We begin with the raw amino-acid sequence, 341 residues long: Methionine import ATP-binding protein MetN 1 (341 aa).

An ABC transporter domain is found at 2–241; that stretch reads IEFRQVSKTF…PKTTIAQNFV (240 aa). 38 to 45 provides a ligand contact to ATP; that stretch reads GYSGAGKS.

The protein belongs to the ABC transporter superfamily. Methionine importer (TC 3.A.1.24) family. In terms of assembly, the complex is composed of two ATP-binding proteins (MetN), two transmembrane proteins (MetI) and a solute-binding protein (MetQ).

Its subcellular location is the cell membrane. It carries out the reaction L-methionine(out) + ATP + H2O = L-methionine(in) + ADP + phosphate + H(+). The catalysed reaction is D-methionine(out) + ATP + H2O = D-methionine(in) + ADP + phosphate + H(+). Its function is as follows. Part of the ABC transporter complex MetNIQ involved in methionine import. Responsible for energy coupling to the transport system. This chain is Methionine import ATP-binding protein MetN 1, found in Staphylococcus aureus (strain MW2).